Consider the following 354-residue polypeptide: GTPase Obg (354 aa).

The region spanning 1–159 (MKFVDEVKIH…RDLVLELKLL (159 aa)) is the Obg domain. The OBG-type G domain occupies 160-333 (ADVGIVGYPN…LLDAVGRALF (174 aa)). Residues 166-173 (GYPNAGKS), 191-195 (FTTLT), 212-215 (DIPG), 283-286 (TKID), and 314-316 (SAV) contribute to the GTP site. Residues Ser-173 and Thr-193 each contribute to the Mg(2+) site.

Belongs to the TRAFAC class OBG-HflX-like GTPase superfamily. OBG GTPase family. In terms of assembly, monomer. Mg(2+) serves as cofactor.

It is found in the cytoplasm. An essential GTPase which binds GTP, GDP and possibly (p)ppGpp with moderate affinity, with high nucleotide exchange rates and a fairly low GTP hydrolysis rate. Plays a role in control of the cell cycle, stress response, ribosome biogenesis and in those bacteria that undergo differentiation, in morphogenesis control. The chain is GTPase Obg from Anaeromyxobacter dehalogenans (strain 2CP-1 / ATCC BAA-258).